We begin with the raw amino-acid sequence, 352 residues long: Ion-translocating oxidoreductase complex subunit D (352 aa).

Helical transmembrane passes span 20–40 (IMLLVLLAAVPGIAAQLWFFG), 42–62 (GTLVQILLASVSALLAEALVL), 78–109 (ALLTGLLLAVSIPPLAPWWMVVLGTVFAVIIA), 123–143 (PAMIGYVVLLISFPVQMTSWL), and 148–168 (IAVNIPGFIDAIQVIFSGHTA). FMN phosphoryl threonine is present on Thr-187. Transmembrane regions (helical) follow at residues 214 to 234 (ILAGVGWQWVNLAWLAGGVWL), 242 to 262 (WHIPLSFLVTLALCATLGWLF), 267 to 287 (LAAPQIHLLSGATMLGAFFIL), 301 to 321 (LIFGALAGLLVWMIRSFGGYP), and 322 to 342 (DGVAFAVLLANITVPLIDYYT).

The protein belongs to the NqrB/RnfD family. In terms of assembly, the complex is composed of six subunits: RsxA, RsxB, RsxC, RsxD, RsxE and RsxG. The cofactor is FMN.

It is found in the cell inner membrane. Functionally, part of a membrane-bound complex that couples electron transfer with translocation of ions across the membrane. Required to maintain the reduced state of SoxR. In Escherichia coli O6:H1 (strain CFT073 / ATCC 700928 / UPEC), this protein is Ion-translocating oxidoreductase complex subunit D.